We begin with the raw amino-acid sequence, 631 residues long: Dolichyl-diphosphooligosaccharide--protein glycosyltransferase subunit 2 (631 aa).

Residues 1–22 form the signal peptide; the sequence is MAPPGSSTVFLLALTIIASTWA. The Lumenal portion of the chain corresponds to 23–540; the sequence is LTPTHYLTKH…REPEKRPPTV (518 aa). Residue asparagine 106 is glycosylated (N-linked (GlcNAc...) asparagine). A Glycyl lysine isopeptide (Lys-Gly) (interchain with G-Cter in ubiquitin) cross-link involves residue lysine 154. Residues 541 to 561 traverse the membrane as a helical segment; the sequence is VSNTFTALILSPLLLLFALWI. Residues 562-571 lie on the Cytoplasmic side of the membrane; that stretch reads RIGANVSNFT. A helical transmembrane segment spans residues 572–592; it reads FAPSTIIFHLGHAAMLGLMYV. The Lumenal portion of the chain corresponds to 593 to 596; that stretch reads YWTQ. The helical transmembrane segment at 597-617 threads the bilayer; sequence LNMFQTLKYLAILGSVTFLAG. Topologically, residues 618–631 are cytoplasmic; that stretch reads NRMLAQQAVKRTAH.

Belongs to the SWP1 family. Component of the oligosaccharyltransferase (OST) complex. OST exists in two different complex forms which contain common core subunits RPN1, RPN2, OST48, OST4, DAD1 and TMEM258, either STT3A or STT3B as catalytic subunits, and form-specific accessory subunits. STT3A complex assembly occurs through the formation of 3 subcomplexes. Subcomplex 1 contains RPN1 and TMEM258, subcomplex 2 contains the STT3A-specific subunits STT3A, DC2/OSTC, and KCP2 as well as the core subunit OST4, and subcomplex 3 contains RPN2, DAD1, and OST48. The STT3A complex can form stable complexes with the Sec61 complex or with both the Sec61 and TRAP complexes. Interacts with DDI2. Interacts with TMEM35A/NACHO. As to expression, expressed in all tissues tested.

The protein resides in the endoplasmic reticulum. It localises to the endoplasmic reticulum membrane. It participates in protein modification; protein glycosylation. Subunit of the oligosaccharyl transferase (OST) complex that catalyzes the initial transfer of a defined glycan (Glc(3)Man(9)GlcNAc(2) in eukaryotes) from the lipid carrier dolichol-pyrophosphate to an asparagine residue within an Asn-X-Ser/Thr consensus motif in nascent polypeptide chains, the first step in protein N-glycosylation. N-glycosylation occurs cotranslationally and the complex associates with the Sec61 complex at the channel-forming translocon complex that mediates protein translocation across the endoplasmic reticulum (ER). All subunits are required for a maximal enzyme activity. The chain is Dolichyl-diphosphooligosaccharide--protein glycosyltransferase subunit 2 from Homo sapiens (Human).